A 36-amino-acid chain; its full sequence is Photosystem I reaction center subunit VIII (36 aa).

The helical transmembrane segment at 7–29 (PSILVPLVGIIFPGISMALLFIY) threads the bilayer.

The protein belongs to the PsaI family.

The protein resides in the plastid. The protein localises to the chloroplast thylakoid membrane. Its function is as follows. May help in the organization of the PsaL subunit. The chain is Photosystem I reaction center subunit VIII from Gracilaria tenuistipitata var. liui (Red alga).